The sequence spans 738 residues: MFDKIELSVSPYDTAWVAMIPSLNSVQAPFFPECTKWIVDNQLSDGSWGLPHHHPLLIKDTLSSTLACVLALKKWGVGETLVNKGLQFIELNSTSLNDEKQHTPIGFDIIFPAMLEHAKELALNLPLKSDVIDAMLHRRDVDLKSGSGGSNTEGRKAYLAYIAEGIGKFQDWEMVMKYQRKNGSLFNSPSTTAAAFSHLRNADCLQYLQSVLQKYGNAVPTIYPLDVYSRLLMVDILERLGIDRHFRKEIKLVLEETYRYWLQGNEEIFLDCITCAMAFRILRVNGYDVSSDVFTQFTEDHFFDSLGGYLKDTRTVLELYRASQILYPDEPLLEKQNSWTNHFLEKCLSSGSSYADGPRECITEVVHNALNCPYYADLERLTNRRSIENYNVDETRILKASYRCLNTGNQHFLKLAVEDFNLCQLIHQEELQQLGRWVVEKRLNKLKFARQKLGYCYFSAAATLFAPELSDARLSWAKNGVLTTVVDDFFDVGGSVEELINLIQLIEKWDVDESTHFCSEQVEIIFSALRSTISEIGDKAFTWQGRKVTSHVIKIWLDLLKSMLTETLWTKSKSIPTLDEYMINGYVSFALGPIVLPALFLVGPKLTEEDVRDPELHDLFKAMGTCGRLLNDWRGFQRESKEGKLNAVSLHMIQGNGGVNEEEAIRKIKGLINSQRSELLRLVLREKNSNIPRACKDLFWKMIKVLHLFYLKDDGFTSNEMISTANAVITEPVAFHGP.

Mg(2+)-binding residues include Asp487, Asp491, Asn631, Asp632, and Glu639. The short motif at 487–491 is the DDXXD motif element; that stretch reads DDFFD.

It belongs to the terpene synthase family. Mg(2+) serves as cofactor.

It carries out the reaction ent-copalyl diphosphate = ent-kaur-16-ene + diphosphate. It participates in secondary metabolite biosynthesis; terpenoid biosynthesis. Functionally, diterpene cyclase involved in the biosynthesis of labdane-related diterpenoids (LRDs) natural products. Catalyzes the cyclization of ent-CDP into ent-kaurene. The chain is Ent-kaurene synthase-like 1 from Ricinus communis (Castor bean).